A 449-amino-acid polypeptide reads, in one-letter code: XK-related protein 2 (449 aa).

Helical transmembrane passes span 35–55 (FSIL…LYMV), 68–88 (TYTF…LIFV), 98–118 (LSLF…EAMI), 174–194 (IQAF…SLIS), 204–224 (LMAF…MLAI), 241–261 (LCIT…LVLF), 269–289 (AVPF…VKFW), 306–326 (VGTL…NFSC), 357–377 (LVEN…VLLN), and 382–402 (LIAV…LLFF).

It belongs to the XK family.

It is found in the membrane. The chain is XK-related protein 2 (Xkrx) from Mus musculus (Mouse).